A 56-amino-acid polypeptide reads, in one-letter code: Zinc finger mu-protein HVO_0758 (56 aa).

Zn(2+) is bound by residues Cys23, Cys26, Cys45, and Cys48. 2 short sequence motifs (c(P)XCG motif) span residues Cys23–Gly27 and Cys45–Gly49.

Monomer.

In terms of biological role, zinc-binding protein that binds one zinc ion. Is involved in biofilm formation, swarming and glycerol metabolism regulation. The sequence is that of Zinc finger mu-protein HVO_0758 from Haloferax volcanii (strain ATCC 29605 / DSM 3757 / JCM 8879 / NBRC 14742 / NCIMB 2012 / VKM B-1768 / DS2) (Halobacterium volcanii).